Consider the following 326-residue polypeptide: 3-oxopimeloyl-[acyl-carrier-protein] synthase (326 aa).

Residues cysteine 115 and histidine 253 contribute to the active site. The segment at 254–258 (QANIR) is ACP-binding. Residue asparagine 283 is part of the active site.

This sequence belongs to the thiolase-like superfamily. BioZ family.

It carries out the reaction malonyl-[ACP] + an acyl-CoA + H(+) = a 3-oxoacyl-[ACP] + CO2 + CoA. The enzyme catalyses glutaryl-CoA + malonyl-[ACP] + H(+) = 3-oxo-6-carboxyhexanoyl-[ACP] + CO2 + CoA. Its pathway is cofactor biosynthesis; biotin biosynthesis. Its function is as follows. Involved in the formation of the biotin precursor pimeloyl-ACP. Catalyzes the condensation of glutaryl-CoA, an intermediate in lysine degradation, with malonyl-ACP to produce 3-oxopimeloyl-ACP. The sequence is that of 3-oxopimeloyl-[acyl-carrier-protein] synthase from Brucella abortus (strain 2308).